Here is a 43-residue protein sequence, read N- to C-terminus: Omega-ctenitoxin-Pr1a (43 aa).

4 disulfides stabilise this stretch: C2/C17, C9/C22, C16/C33, and C24/C31. G43 bears the Glycine amide mark.

As to expression, expressed by the venom gland.

It is found in the secreted. In terms of biological role, inhibits high-voltage activated calcium channels. Shifts the voltage-dependence for activation towards hyperpolarized membrane potentials for L- (Cav1), P/Q- (Cav2.1/CACNA1A) and R-type (Cav2.3/CACNA1E) calcium currents. Causes immediate agitation and clockwise gyration, followed by the gradual development of general flaccid paralysis when injected intracerebroventricular into mice at dose levels of 5 ug per mouse. The sequence is that of Omega-ctenitoxin-Pr1a from Phoneutria reidyi (Brazilian Amazonian armed spider).